Reading from the N-terminus, the 450-residue chain is Phosphoglucosamine mutase (450 aa).

S107 (phosphoserine intermediate) is an active-site residue. Mg(2+) contacts are provided by S107, D246, D248, and D250. S107 carries the post-translational modification Phosphoserine.

It belongs to the phosphohexose mutase family. The cofactor is Mg(2+). Post-translationally, activated by phosphorylation.

It carries out the reaction alpha-D-glucosamine 1-phosphate = D-glucosamine 6-phosphate. Catalyzes the conversion of glucosamine-6-phosphate to glucosamine-1-phosphate. This is Phosphoglucosamine mutase from Dechloromonas aromatica (strain RCB).